The primary structure comprises 394 residues: Ceramide glucosyltransferase-B (394 aa).

Over 1-10 (MAVLDLALQG) the chain is Lumenal. The chain crosses the membrane as a helical span at residues 11–32 (LAIFGCILFFVLWFMHFLSIVY). The Cytoplasmic segment spans residues 33 to 195 (TRLHLNKKVS…QVYFGTSHPR (163 aa)). D92 is a short sequence motif (D1). Residue D144 is a short sequence motif, D2. A helical membrane pass occupies residues 196 to 215 (SYISANVTGIKCVTGMSCLM). The Lumenal segment spans residues 216-287 (RKEVLDQAGG…KLRINMLPAT (72 aa)). Position 236 (D236) is a short sequence motif, D3. Residue D236 is the Proton acceptor of the active site. Positions 272–276 (RMIRW) match the (Q/R)XXRW motif. A helical membrane pass occupies residues 288–304 (IICEPISECFVASLIIG). Over 305 to 309 (WAAHH) the chain is Cytoplasmic. Residues 310 to 328 (IFRWDIMVFFMCHCLAWFI) form a helical membrane-spanning segment. Over 329-348 (FDYIQLRGVQGGPLNFSKLD) the chain is Lumenal. Residues 349–369 (YAVAWFIRESMTIYIFLSALW) traverse the membrane as a helical segment. At 370–394 (DPTISWRTGRYRLRCGGTAEEILDV) the chain is on the cytoplasmic side.

It belongs to the glycosyltransferase 2 family.

It localises to the golgi apparatus membrane. The catalysed reaction is an N-acylsphing-4-enine + UDP-alpha-D-glucose = a beta-D-glucosyl-(1&lt;-&gt;1')-N-acylsphing-4-enine + UDP + H(+). It catalyses the reaction UDP-alpha-D-xylose + an N-acylsphing-4-enine = a beta-D-xylosyl-(1&lt;-&gt;1')-N-acylsphing-4-enine + UDP + H(+). The enzyme catalyses N-(9Z-octadecenoyl)-sphing-4-enine + UDP-alpha-D-xylose = beta-D-xylosyl-(1&lt;-&gt;1')-N-(9Z-octadecenoyl)-sphing-4-enine + UDP + H(+). It participates in lipid metabolism; sphingolipid metabolism. In terms of biological role, participates in the initial step of the glucosylceramide-based glycosphingolipid/GSL synthetic pathway at the cytosolic surface of the Golgi. Catalyzes the transfer of glucose from UDP-glucose to ceramide to produce glucosylceramide/GlcCer (such as beta-D-glucosyl-(1&lt;-&gt;1')-N-acylsphing-4-enine). Glucosylceramide is the core component of glycosphingolipids/GSLs, amphipathic molecules consisting of a ceramide lipid moiety embedded in the outer leaflet of the membrane, linked to one of hundreds of different externally oriented oligosaccharide structures. Glycosphingolipids are essential components of membrane microdomains that mediate membrane trafficking and signal transduction. They are implicated in many fundamental cellular processes, including growth, differentiation, migration, morphogenesis, cell-to-cell and cell-to-matrix interactions. Catalyzes the synthesis of xylosylceramide/XylCer (such as beta-D-xylosyl-(1&lt;-&gt;1')-N-acylsphing-4-enine) using UDP-Xyl as xylose donor. This Xenopus laevis (African clawed frog) protein is Ceramide glucosyltransferase-B (ugcg-b).